The chain runs to 340 residues: 4-hydroxythreonine-4-phosphate dehydrogenase (340 aa).

A substrate-binding site is contributed by threonine 135. A divalent metal cation is bound by residues histidine 170, histidine 215, and histidine 276. Positions 284, 293, and 302 each coordinate substrate.

Belongs to the PdxA family. In terms of assembly, homodimer. Requires a divalent metal cation as cofactor.

The protein resides in the cytoplasm. The enzyme catalyses 4-(phosphooxy)-L-threonine + NAD(+) = 3-amino-2-oxopropyl phosphate + CO2 + NADH. It functions in the pathway cofactor biosynthesis; pyridoxine 5'-phosphate biosynthesis; pyridoxine 5'-phosphate from D-erythrose 4-phosphate: step 4/5. In terms of biological role, catalyzes the NAD(P)-dependent oxidation of 4-(phosphooxy)-L-threonine (HTP) into 2-amino-3-oxo-4-(phosphooxy)butyric acid which spontaneously decarboxylates to form 3-amino-2-oxopropyl phosphate (AHAP). The chain is 4-hydroxythreonine-4-phosphate dehydrogenase from Synechococcus sp. (strain JA-2-3B'a(2-13)) (Cyanobacteria bacterium Yellowstone B-Prime).